A 736-amino-acid polypeptide reads, in one-letter code: Elongation factor 2 (736 aa).

The tr-type G domain maps to 18 to 262 (TRVRNIGIIA…AVIKFVPNPV (245 aa)). GTP contacts are provided by residues 27–34 (AHVDHGKT), 93–97 (DTPGH), and 147–150 (NKVD). Diphthamide is present on His603.

It belongs to the TRAFAC class translation factor GTPase superfamily. Classic translation factor GTPase family. EF-G/EF-2 subfamily.

It localises to the cytoplasm. Its function is as follows. Catalyzes the GTP-dependent ribosomal translocation step during translation elongation. During this step, the ribosome changes from the pre-translocational (PRE) to the post-translocational (POST) state as the newly formed A-site-bound peptidyl-tRNA and P-site-bound deacylated tRNA move to the P and E sites, respectively. Catalyzes the coordinated movement of the two tRNA molecules, the mRNA and conformational changes in the ribosome. This Metallosphaera sedula (strain ATCC 51363 / DSM 5348 / JCM 9185 / NBRC 15509 / TH2) protein is Elongation factor 2.